Here is a 140-residue protein sequence, read N- to C-terminus: Natriuretic peptides B (140 aa).

The first 26 residues, 1–26 (MEPCAALPRALLLLLFLHLSPLGGRP), serve as a signal peptide directing secretion. A disordered region spans residues 71–94 (LEPLHRSHSPAEAPEAGGTPRGVL). A disulfide bridge links Cys-118 with Cys-134.

It belongs to the natriuretic peptide family. In terms of processing, the precursor molecule is proteolytically cleaved by the endoproteases FURIN or CORIN at Arg-108 to produce the brain natriuretic peptide 32. CORIN also cleaves the precursor molecule at additional residues including Arg-105, Arg-108 and possibly Lys-111. Undergoes further proteolytic cleavage by various proteases such as DPP4, MME and possibly FAP, to give rise to a variety of shorter peptides. Cleaved at Pro-110 by the prolyl endopeptidase FAP (seprase) activity (in vitro). Degraded by IDE. During IDE degradation, the resulting products initially increase the activation of NPR1 and can also stimulate NPR2 to produce cGMP before the fragments are completely degraded and inactivated by IDE (in vitro). As to expression, brain and also in atria, but at much lower levels than ANP.

The protein localises to the secreted. In terms of biological role, cardiac hormone that plays a key role in mediating cardio-renal homeostasis. May also function as a paracrine antifibrotic factor in the heart. Acts by specifically binding and stimulating NPR1 to produce cGMP, which in turn activates effector proteins that drive various biological responses. Involved in regulating the extracellular fluid volume and maintaining the fluid-electrolyte balance through natriuresis, diuresis, vasorelaxation, and inhibition of renin and aldosterone secretion. Binds the clearance receptor NPR3. May affect cardio-renal homeostasis. Able to promote the production of cGMP although its potency is very low compared to brain natriuretic peptide 32. In Canis lupus familiaris (Dog), this protein is Natriuretic peptides B (NPPB).